A 188-amino-acid chain; its full sequence is HTH-type transcriptional repressor AcnR (188 aa).

Residues V10–M70 enclose the HTH tetR-type domain. Positions T33–F52 form a DNA-binding region, H-T-H motif. Residues L79–V80, R130, and N134 contribute to the citrate site. E181 provides a ligand contact to Mg(2+). R185 contacts citrate.

Homodimer.

Its function is as follows. AcnR negatively controls the expression of the aconitase gene acn. This Corynebacterium efficiens (strain DSM 44549 / YS-314 / AJ 12310 / JCM 11189 / NBRC 100395) protein is HTH-type transcriptional repressor AcnR.